Here is a 769-residue protein sequence, read N- to C-terminus: Endonuclease MutS2 (769 aa).

ATP is bound at residue 335–342; the sequence is GGNAGGKT. The region spanning 694-769 is the Smr domain; the sequence is IDLRGKRADV…GDGMTEVELV (76 aa).

It belongs to the DNA mismatch repair MutS family. MutS2 subfamily. Homodimer. Binds to stalled ribosomes, contacting rRNA.

Endonuclease that is involved in the suppression of homologous recombination and thus may have a key role in the control of bacterial genetic diversity. In terms of biological role, acts as a ribosome collision sensor, splitting the ribosome into its 2 subunits. Detects stalled/collided 70S ribosomes which it binds and splits by an ATP-hydrolysis driven conformational change. Acts upstream of the ribosome quality control system (RQC), a ribosome-associated complex that mediates the extraction of incompletely synthesized nascent chains from stalled ribosomes and their subsequent degradation. Probably generates substrates for RQC. The polypeptide is Endonuclease MutS2 (Maridesulfovibrio salexigens (strain ATCC 14822 / DSM 2638 / NCIMB 8403 / VKM B-1763) (Desulfovibrio salexigens)).